The primary structure comprises 351 residues: Phosphoribosylformylglycinamidine cyclo-ligase (351 aa).

It belongs to the AIR synthase family.

It is found in the cytoplasm. It catalyses the reaction 2-formamido-N(1)-(5-O-phospho-beta-D-ribosyl)acetamidine + ATP = 5-amino-1-(5-phospho-beta-D-ribosyl)imidazole + ADP + phosphate + H(+). The protein operates within purine metabolism; IMP biosynthesis via de novo pathway; 5-amino-1-(5-phospho-D-ribosyl)imidazole from N(2)-formyl-N(1)-(5-phospho-D-ribosyl)glycinamide: step 2/2. The polypeptide is Phosphoribosylformylglycinamidine cyclo-ligase (Burkholderia vietnamiensis (strain G4 / LMG 22486) (Burkholderia cepacia (strain R1808))).